The primary structure comprises 385 residues: Photoreceptor ankyrin repeat protein (385 aa).

5 ANK repeats span residues 17-46 (CNLK…SPEE), 53-83 (NGRT…DVNQ), 87-116 (DGNT…GLDL), 122-151 (RGLT…DLSS), and 156-190 (RGKT…QLSL). Residues 270-385 (LGTRGKSVPE…GGLGQAGGSK (116 aa)) are disordered. The span at 284-297 (APPPPPEPHPPQQV) shows a compositional bias: pro residues. The span at 304–326 (APNQSPQSMFSQWLQSRDSTRSQ) shows a compositional bias: polar residues. Residues 361 to 373 (FQERKKKEEETEP) are compositionally biased toward basic and acidic residues. The span at 374–385 (RGGGLGQAGGSK) shows a compositional bias: gly residues.

As to expression, isoform 1: Expressed predominantly in the retina. Isoform 2: Expressed in the pineal gland.

Its subcellular location is the cytoplasm. The protein localises to the cytosol. It is found in the nucleus. In terms of biological role, acts as a transcriptional repressor for CRX-activated photoreceptor gene regulation. The protein is Photoreceptor ankyrin repeat protein of Mus musculus (Mouse).